A 327-amino-acid chain; its full sequence is Alkanal monooxygenase beta chain (327 aa).

The protein belongs to the bacterial luciferase oxidoreductase family. In terms of assembly, heterodimer of an alpha and a beta chain.

The enzyme catalyses a long-chain fatty aldehyde + FMNH2 + O2 = a long-chain fatty acid + hnu + FMN + H2O + 2 H(+). In terms of biological role, light-emitting reaction in luminous bacteria. The specific role of the beta subunit is unknown, but it is absolutely required for bioluminescence activity. The polypeptide is Alkanal monooxygenase beta chain (luxB) (Photorhabdus luminescens (Xenorhabdus luminescens)).